Reading from the N-terminus, the 324-residue chain is Phospho-N-acetylmuramoyl-pentapeptide-transferase (324 aa).

Transmembrane regions (helical) follow at residues 5 to 25 (GLLVTAGVAFLISVALSPLFI), 52 to 72 (PTMGGIVIYVSMMVTTLIMAI), 77 to 97 (LGAEVSLLLLVTFGYGLIGFL), 117 to 137 (LLGQLIIAIAFFAIAKGQGFD), 147 to 167 (ITFDLYWAYFILVLFMLIGGS), 176 to 196 (LDGLLSGTAAIAFGAFSIIAV), 202 to 222 (AVAIFCMAVVGAVLGFLVFNA), 227 to 247 (VFMGDTGSLALGGAIAAVAIL), 253 to 273 (LLVIIGGVFVMETLSVIIQVI), and 302 to 322 (VVVTFWSVGFLLAVLGIYIGV).

It belongs to the glycosyltransferase 4 family. MraY subfamily. Mg(2+) serves as cofactor.

It is found in the cell membrane. It catalyses the reaction UDP-N-acetyl-alpha-D-muramoyl-L-alanyl-gamma-D-glutamyl-meso-2,6-diaminopimeloyl-D-alanyl-D-alanine + di-trans,octa-cis-undecaprenyl phosphate = di-trans,octa-cis-undecaprenyl diphospho-N-acetyl-alpha-D-muramoyl-L-alanyl-D-glutamyl-meso-2,6-diaminopimeloyl-D-alanyl-D-alanine + UMP. It participates in cell wall biogenesis; peptidoglycan biosynthesis. Its function is as follows. Catalyzes the initial step of the lipid cycle reactions in the biosynthesis of the cell wall peptidoglycan: transfers peptidoglycan precursor phospho-MurNAc-pentapeptide from UDP-MurNAc-pentapeptide onto the lipid carrier undecaprenyl phosphate, yielding undecaprenyl-pyrophosphoryl-MurNAc-pentapeptide, known as lipid I. The sequence is that of Phospho-N-acetylmuramoyl-pentapeptide-transferase from Bacillus cytotoxicus (strain DSM 22905 / CIP 110041 / 391-98 / NVH 391-98).